Consider the following 187-residue polypeptide: Rusticyanin (187 aa).

Positions 1–32 (MYTQNTMKKNWYVTVGAAAALAATVGMGTAMA) are cleaved as a signal peptide. One can recognise a Plastocyanin-like domain in the interval 85–187 (SFEVHDKKNP…TGMFGKIIVK (103 aa)). Positions 117, 170, 175, and 180 each coordinate Cu cation.

In terms of assembly, monomer. Cu cation is required as a cofactor.

It localises to the periplasm. Functionally, electron carrier from cytochrome c552 to the A-type oxidase. The polypeptide is Rusticyanin (rus) (Acidithiobacillus ferridurans).